A 434-amino-acid chain; its full sequence is Oxysterol-binding protein homolog 4 (434 aa).

Positions 7 to 29 are ALPS motif; that stretch reads SSSWTSFLKSIASFNGDLSSLSA. Positions 16 to 366 are OSBP-related domain (ORD); sequence SIASFNGDLS…WQRRWFKDFD (351 aa). 24–29 provides a ligand contact to a 1,2-diacyl-sn-glycero-3-phospho-(1D-myo-inositol 4-phosphate); that stretch reads LSSLSA. A 20-hydroxycholesterol-binding site is contributed by Gln-96. Gln-96 is a binding site for 25-hydroxycholesterol. 7beta-hydroxycholesterol-binding residues include Gln-96 and Arg-100. Gln-96 is a binding site for cholesterol. Gln-96 provides a ligand contact to ergosterol. A 1,2-diacyl-sn-glycero-3-phospho-(1D-myo-inositol 4-phosphate) contacts are provided by residues 109–112, 143–144, Lys-336, Glu-340, and Arg-344; these read KPLN and HH. Thr-370 is subject to Phosphothreonine. At Ser-389 the chain carries Phosphoserine.

It belongs to the OSBP family.

The protein localises to the cytoplasm. The protein resides in the golgi apparatus membrane. In terms of biological role, lipid transport protein (LTP) involved in non-vesicular transfer of lipids between membranes. Functions in phosphoinositide-coupled directional transport of various lipids by carrying the lipid molecule in a hydrophobic pocket and transferring it between membranes through the cytosol. Involved in maintenance of intracellular sterol distribution and homeostasis. Involved in lipid countertransport between the Golgi complex and membranes of the endoplasmic reticulum. Specifically exchanges sterol with phosphatidylinositol 4-phosphate (PI4P), delivering sterol to the Golgi in exchange for PI4P, which is delivered to the ER-localized PI4P phosphatase SAC1 for degradation. Thus, by maintaining a PI4P gradient at the ER/Golgi interface, SAC1 may drive PS transport. Displays a similar affinity for PI4P and sterols. Binds sterol and PI4P in a mutually exclusive manner. Involved in ergosterol transport from the plasma membrane (PM) to the ER. Mediates sterol transport from the ER to mitochondria. Involved in the negative regulation of Golgi-derived transport vesicle biogenesis. Plays a role in the positive regulation of vesicular transport of ceramide from the ER to the Golgi, negatively regulating COPII-mediated ER export of cargos. This is Oxysterol-binding protein homolog 4 from Saccharomyces cerevisiae (strain ATCC 204508 / S288c) (Baker's yeast).